The following is a 235-amino-acid chain: Type III pantothenate kinase (235 aa).

6–13 (DVGNNYIK) is an ATP binding site. Residues Tyr81 and 88-91 (GTDR) each bind substrate. Catalysis depends on Asp90, which acts as the Proton acceptor. Residue Asp111 coordinates K(+). Thr114 contributes to the ATP binding site. Thr166 lines the substrate pocket.

It belongs to the type III pantothenate kinase family. In terms of assembly, homodimer. NH4(+) is required as a cofactor. The cofactor is K(+).

The protein resides in the cytoplasm. It carries out the reaction (R)-pantothenate + ATP = (R)-4'-phosphopantothenate + ADP + H(+). It functions in the pathway cofactor biosynthesis; coenzyme A biosynthesis; CoA from (R)-pantothenate: step 1/5. Its function is as follows. Catalyzes the phosphorylation of pantothenate (Pan), the first step in CoA biosynthesis. The protein is Type III pantothenate kinase of Cytophaga hutchinsonii (strain ATCC 33406 / DSM 1761 / CIP 103989 / NBRC 15051 / NCIMB 9469 / D465).